A 330-amino-acid chain; its full sequence is NADH-quinone oxidoreductase subunit H (330 aa).

Transmembrane regions (helical) follow at residues 3-23, 76-96, 118-138, 161-181, 188-208, 244-264, 272-292, and 307-327; these read AAFVIATIIKILIVLGLFSAL, PVFMIAPVITAATAFIAMAAI, VGLLFVLGVMAAGLYGPLLAG, EVVTGLSVLAPVMIVGSISLV, AGGMGNWLIWKQPLAFVLFLI, FFIGEYANMFTIGFLVSLIFL, FIPGAIAILIKVFFFFFLFLW, and WLCWKVLMPLAVINVVITGIV.

It belongs to the complex I subunit 1 family. NDH-1 is composed of 14 different subunits. Subunits NuoA, H, J, K, L, M, N constitute the membrane sector of the complex.

The protein resides in the cell inner membrane. The catalysed reaction is a quinone + NADH + 5 H(+)(in) = a quinol + NAD(+) + 4 H(+)(out). Its function is as follows. NDH-1 shuttles electrons from NADH, via FMN and iron-sulfur (Fe-S) centers, to quinones in the respiratory chain. The immediate electron acceptor for the enzyme in this species is believed to be ubiquinone. Couples the redox reaction to proton translocation (for every two electrons transferred, four hydrogen ions are translocated across the cytoplasmic membrane), and thus conserves the redox energy in a proton gradient. This subunit may bind ubiquinone. This chain is NADH-quinone oxidoreductase subunit H, found in Nitratiruptor sp. (strain SB155-2).